The following is a 189-amino-acid chain: dCTP deaminase (189 aa).

Residues 112 to 117, 136 to 138, Gln-157, Tyr-171, and Gln-181 each bind dCTP; these read KSTYAR and TLE. Glu-138 functions as the Proton donor/acceptor in the catalytic mechanism.

It belongs to the dCTP deaminase family. As to quaternary structure, homotrimer.

It catalyses the reaction dCTP + H2O + H(+) = dUTP + NH4(+). The protein operates within pyrimidine metabolism; dUMP biosynthesis; dUMP from dCTP (dUTP route): step 1/2. Catalyzes the deamination of dCTP to dUTP. The protein is dCTP deaminase of Burkholderia orbicola (strain MC0-3).